The following is a 632-amino-acid chain: Myrcene synthase TPS3FN, chloroplastic (632 aa).

The N-terminal 55 residues, 1 to 55 (MHCMAVHQFSPSIVSSLPTISTYNNNHFCRFFTPKTSISPISKTKSKSSTCYPIQ), are a transit peptide targeting the chloroplast. (2E)-geranyl diphosphate is bound by residues Arg343, Asp380, Asp384, Arg524, and Asp527. Positions 380 and 384 each coordinate Mg(2+). The DDXXD motif signature appears at 380 to 384 (DDIYD). 3 residues coordinate Mg(2+): Asp527, Thr531, and Glu535.

The protein belongs to the terpene synthase family. Tpsb subfamily. The cofactor is Mg(2+). Requires Mn(2+) as cofactor. Expressed in glandular trichomes two to four weeks after flowering onset.

It localises to the plastid. Its subcellular location is the chloroplast. It carries out the reaction (2E)-geranyl diphosphate = beta-myrcene + diphosphate. Its pathway is secondary metabolite biosynthesis; terpenoid biosynthesis. Functionally, involved in monoterpene (C10) olefins biosynthesis, constituants of cannabinoids and terpenoids-rich resins. Catalyzes strictly the conversion of (2E)-geranyl diphosphate to beta-myrcene. The polypeptide is Myrcene synthase TPS3FN, chloroplastic (Cannabis sativa (Hemp)).